We begin with the raw amino-acid sequence, 430 residues long: Pyrokinin-1 receptor (430 aa).

Over Met-1–Pro-16 the chain is Extracellular. N-linked (GlcNAc...) asparagine glycosylation occurs at Asn-5. Residues Leu-17 to Gly-37 traverse the membrane as a helical segment. Over Asn-38–Thr-53 the chain is Cytoplasmic. The chain crosses the membrane as a helical span at residues Ala-54–Val-74. Residues Pro-75–Gly-96 are Extracellular-facing. Cysteines 94 and 171 form a disulfide. A helical transmembrane segment spans residues Arg-97 to Val-117. The Cytoplasmic portion of the chain corresponds to Glu-118–Arg-140. Residues Ile-141–Gly-161 traverse the membrane as a helical segment. The Extracellular portion of the chain corresponds to Ile-162–Ser-185. The helical transmembrane segment at Thr-186–Val-206 threads the bilayer. Residues His-207–Arg-281 lie on the Cytoplasmic side of the membrane. A helical membrane pass occupies residues Val-282–Ala-302. The Extracellular portion of the chain corresponds to Gln-303–His-321. The chain crosses the membrane as a helical span at residues Glu-322–Ile-342. Residues Asn-343–Asn-430 are Cytoplasmic-facing. The segment covering Thr-388–Ser-397 has biased composition (polar residues). Residues Thr-388–Thr-413 form a disordered region.

The protein belongs to the G-protein coupled receptor 1 family.

Its subcellular location is the cell membrane. In terms of biological role, receptor for the neuropeptide CAP-3/pyrokinin-1 (TGPSASSGLWFGPRL-amide). Also activated weakly by other neuropeptides terminating in the sequence PRL-amide including pyrokinin-2, Hug-gamma, and ecdysis-triggering-hormone-1. The activity of this receptor is mediated by G proteins which activate a phosphatidyl-inositol-calcium second messenger system. The sequence is that of Pyrokinin-1 receptor from Drosophila melanogaster (Fruit fly).